The following is a 287-amino-acid chain: Pyridoxal kinase PdxY (287 aa).

Residues Ser10 and Thr45–Gln46 contribute to the substrate site. ATP is bound by residues Asp112, Ala144, Glu149, Lys182, and Arg209 to Val212. Asp224 contacts substrate.

The protein belongs to the pyridoxine kinase family. PdxY subfamily. Homodimer. Requires Mg(2+) as cofactor.

It carries out the reaction pyridoxal + ATP = pyridoxal 5'-phosphate + ADP + H(+). It functions in the pathway cofactor metabolism; pyridoxal 5'-phosphate salvage; pyridoxal 5'-phosphate from pyridoxal: step 1/1. In terms of biological role, pyridoxal kinase involved in the salvage pathway of pyridoxal 5'-phosphate (PLP). Catalyzes the phosphorylation of pyridoxal to PLP. This is Pyridoxal kinase PdxY from Escherichia coli O6:H1 (strain CFT073 / ATCC 700928 / UPEC).